Reading from the N-terminus, the 224-residue chain is Uracil-DNA glycosylase (224 aa).

Asp64 acts as the Proton acceptor in catalysis.

Belongs to the uracil-DNA glycosylase (UDG) superfamily. UNG family.

Its subcellular location is the cytoplasm. The enzyme catalyses Hydrolyzes single-stranded DNA or mismatched double-stranded DNA and polynucleotides, releasing free uracil.. Its function is as follows. Excises uracil residues from the DNA which can arise as a result of misincorporation of dUMP residues by DNA polymerase or due to deamination of cytosine. The polypeptide is Uracil-DNA glycosylase (Clostridioides difficile (strain 630) (Peptoclostridium difficile)).